The sequence spans 104 residues: Large ribosomal subunit protein uL24 (104 aa).

It belongs to the universal ribosomal protein uL24 family. In terms of assembly, part of the 50S ribosomal subunit.

In terms of biological role, one of two assembly initiator proteins, it binds directly to the 5'-end of the 23S rRNA, where it nucleates assembly of the 50S subunit. Its function is as follows. One of the proteins that surrounds the polypeptide exit tunnel on the outside of the subunit. The sequence is that of Large ribosomal subunit protein uL24 from Clostridium perfringens (strain SM101 / Type A).